The following is a 393-amino-acid chain: Acetylornithine aminotransferase (393 aa).

Pyridoxal 5'-phosphate contacts are provided by residues 105–106 (GA) and phenylalanine 138. A N(2)-acetyl-L-ornithine-binding site is contributed by arginine 141. 224-227 (DEVQ) contacts pyridoxal 5'-phosphate. Position 253 is an N6-(pyridoxal phosphate)lysine (lysine 253). A N(2)-acetyl-L-ornithine-binding site is contributed by serine 281. Threonine 282 serves as a coordination point for pyridoxal 5'-phosphate.

It belongs to the class-III pyridoxal-phosphate-dependent aminotransferase family. ArgD subfamily. Homodimer. Pyridoxal 5'-phosphate serves as cofactor.

It is found in the cytoplasm. It carries out the reaction N(2)-acetyl-L-ornithine + 2-oxoglutarate = N-acetyl-L-glutamate 5-semialdehyde + L-glutamate. Its pathway is amino-acid biosynthesis; L-arginine biosynthesis; N(2)-acetyl-L-ornithine from L-glutamate: step 4/4. This is Acetylornithine aminotransferase from Haemophilus ducreyi (strain 35000HP / ATCC 700724).